The chain runs to 35 residues: Sperm-specific protein Phi-1 (35 aa).

2 stretches are compositionally biased toward basic residues: residues 1 to 17 (PSPT…RSRS) and 25 to 35 (AAKRAKSKTAK). The disordered stretch occupies residues 1 to 35 (PSPTRRSKSRSKSRSRSRSASAGKAAKRAKSKTAK).

Sperm.

The protein resides in the nucleus. It is found in the chromosome. In terms of biological role, involved in nuclear basic protein transition: histones are replaced by spermatid specific proteins which are themselves replaced by protamines in late spermatids. In Mytilus californianus (California mussel), this protein is Sperm-specific protein Phi-1.